A 299-amino-acid polypeptide reads, in one-letter code: DNA-binding transcriptional activator HetR (299 aa).

A DNA-binding domain region spans residues 1-98 (MSNDIDLIKR…GKLLKTLGSQ (98 aa)). Residues 34 to 40 (RHGAFLD) and 60 to 76 (NLRM…KRVK) contribute to the DNA site. Residues 99-216 (EPRYLIQFPY…FYALTRPFYA (118 aa)) form a flap domain region. Ser-152 is a catalytic residue. 179–181 (SEA) lines the DNA pocket. The segment at 217 to 299 (PADDQERTYI…LQMVFGRKED (83 aa)) is hood domain.

This sequence belongs to the peptidase S48 family. As to quaternary structure, upon expression in E.coli most protein is monomeric, although varying amounts of homodimer can be seen. Homodimer; disulfide-linked. Homodimer. Binds the 6 residue C-terminal peptide of PatS; one peptide binds to each subunit. In bacterial two-hybrid assays interacts robustly with itself, Alr2902 and Alr3234 and more weakly with Als1930. In terms of processing, probably autodegrades.

With respect to regulation, protease activity is inhibited by PMSF, suggesting this is a serine protease. Its function is as follows. Controls heterocyst differentiation. Dimerization is required for DNA-binding. Has both a protease and a DNA-binding activity. Controls heterocyst differentiation; increased expression leads to more heterocysts than usual. Has protease activity. Binds the promoter regions of hetR, hepA and patS and is required for their expression. Dimerization is required for DNA-binding, DNA-binding is inhibited by the PatS6 peptide. Binds the inverted repeat 5'-GTAGGCGAGGGGTCTAACCCCTCATTACC-3' found in the hetP promoter, required for expression of hetP. The protein is DNA-binding transcriptional activator HetR of Nostoc sp. (strain PCC 7120 / SAG 25.82 / UTEX 2576).